The chain runs to 315 residues: T cell receptor beta chain MC.7.G5 (315 aa).

Residues 1–21 (MTIRLLCYMGFYFLGAGLMEA) form the signal peptide. Positions 22–114 (DIYQTPRYLV…TSQYLCASSE (93 aa)) constitute an Ig-like V-type domain. The t cell receptor beta variable 25-1 stretch occupies residues 22–114 (DIYQTPRYLV…TSQYLCASSE (93 aa)). A disulfide bridge connects residues cysteine 42 and cysteine 110. The segment at 46-50 (MGHDK) is CDR1. The tract at residues 68–73 (SYGVNS) is CDR2. Asparagine 72 is a glycosylation site (N-linked (GlcNAc...) asparagine). The tract at residues 110 to 127 (CASSEARGLAEFTDTQYF) is CDR3. The tract at residues 122–136 (TDTQYFGPGTRLTVL) is t cell receptor beta joining 2-3. A t cell receptor beta constant 2 region spans residues 138 to 315 (DLKNVFPPEV…AMVKRKDSRG (178 aa)). In terms of domain architecture, Ig-like C1-type spans 145–254 (PEVAVFEPSE…WTQDRAKPVT (110 aa)). A disulfide bond links cysteine 167 and cysteine 232. N-linked (GlcNAc...) asparagine glycosylation is present at asparagine 206. Residues 267 to 281 (CGFTSESYQQGVLSA) form a connecting peptide region. The helical transmembrane segment at 282-304 (TILYEILLGKATLYAVLVSALVL) threads the bilayer. At 305–315 (MAMVKRKDSRG) the chain is on the cytoplasmic side.

Disulfide-linked heterodimer with TRAV38-2DV8*01J31*01C*01 alpha chain. The alpha-beta TR associates with the transmembrane signaling CD3 coreceptor proteins to form the TR-CD3 (TCR). The assembly of alpha-beta TR heterodimers with CD3 occurs in the endoplasmic reticulum where a single alpha-beta TR heterodimer associates with one CD3D-CD3E heterodimer, one CD3G-CD3E heterodimer and one CD247 homodimer forming a stable octameric structure. CD3D-CD3E and CD3G-CD3E heterodimers preferentially associate with TR alpha and TR beta chains (via TM domain), respectively. The association of the CD247 homodimer is the last step of TCR assembly in the endoplasmic reticulum and is required for transport to the cell surface. As to expression, expressed in MR1-restricted CD8-positive T cells.

It localises to the cell membrane. Functionally, the beta chain of TRAV38-2DV8*01J31*01C*01/TRBV25-1*01J2S3*01C2*01 alpha-beta T cell receptor (TR) clonotype that displays pan-cancer cell recognition via the invariant MR1 molecule. On CD8-positive T cell clone MC.7.G5, likely recognizes tumor-specific or -associated metabolite(s) essential for cancer cell survival, triggering killing of many cancer cell types including lung, melanoma, leukemia, colon, breast, prostate, bone and ovarian cancer cells. Mediates cancer cell cytotoxicity in an HLA-independent manner. Has no reactivity to healthy cells even stressed or infected by bacteria. Antigen recognition initiates TR-CD3 clustering on the cell surface and intracellular activation of LCK that phosphorylates the ITAM motifs of CD3G, CD3D, CD3E and CD247 enabling the recruitment of ZAP70. In turn, ZAP70 phosphorylates LAT, which recruits numerous signaling molecules to form the LAT signalosome. The LAT signalosome propagates signal branching to three major signaling pathways, the calcium, the mitogen-activated protein kinase (MAPK) kinase and the nuclear factor NF-kappa-B (NF-kB) pathways, leading to the mobilization of transcription factors that are critical for gene expression and essential for T cell differentiation into effector/memory T cells. The sequence is that of T cell receptor beta chain MC.7.G5 from Homo sapiens (Human).